Here is a 123-residue protein sequence, read N- to C-terminus: Signal recognition particle 14 kDa protein (123 aa).

The tract at residues 99 to 123 (KKKPTPTTTPSSSTTAKTAAKKTKV) is disordered. Residues 103-116 (TPTTTPSSSTTAKT) show a composition bias toward low complexity.

This sequence belongs to the SRP14 family. In terms of assembly, heterodimer with srp9; binds RNA as heterodimer. Component of a signal recognition particle (SRP) complex that consists of a 7SL RNA molecule and six protein subunits: srp72, srp68, srp54, srp19, srp14 and srp9.

It is found in the cytoplasm. Component of the signal recognition particle (SRP) complex, a ribonucleoprotein complex that mediates the cotranslational targeting of secretory and membrane proteins to the endoplasmic reticulum (ER). Srp9 together with srp14 and the Alu portion of the SRP RNA, constitutes the elongation arrest domain of SRP. The complex of srp9 and srp14 is required for SRP RNA binding. The polypeptide is Signal recognition particle 14 kDa protein (srp14-1) (Dictyostelium discoideum (Social amoeba)).